The sequence spans 436 residues: tRNA(Ile)-lysidine synthase (436 aa).

Residue 27 to 32 participates in ATP binding; sequence SGGVDS.

It belongs to the tRNA(Ile)-lysidine synthase family.

The protein localises to the cytoplasm. It catalyses the reaction cytidine(34) in tRNA(Ile2) + L-lysine + ATP = lysidine(34) in tRNA(Ile2) + AMP + diphosphate + H(+). Functionally, ligates lysine onto the cytidine present at position 34 of the AUA codon-specific tRNA(Ile) that contains the anticodon CAU, in an ATP-dependent manner. Cytidine is converted to lysidine, thus changing the amino acid specificity of the tRNA from methionine to isoleucine. The polypeptide is tRNA(Ile)-lysidine synthase (Vibrio vulnificus (strain CMCP6)).